We begin with the raw amino-acid sequence, 1098 residues long: Early transcription factor large subunit homolog (1098 aa).

Residues 17-317 enclose the Helicase ATP-binding domain; the sequence is KGGRAFFPCD…PNGQPLQRQQ (301 aa). 64–71 is a binding site for ATP; it reads WQTGTGKS. The DEAH box signature appears at 246–249; the sequence is DEIH. In terms of domain architecture, Helicase C-terminal spans 489 to 689; the sequence is MMKDILSIIR…EGDKALRKHA (201 aa).

This sequence belongs to the DEAD box helicase family. DEAH subfamily.

The protein resides in the virion. It carries out the reaction ATP + H2O = ADP + phosphate + H(+). In terms of biological role, putative initation factor. The sequence is that of Early transcription factor large subunit homolog from African swine fever virus (isolate Tick/Malawi/Lil 20-1/1983) (ASFV).